We begin with the raw amino-acid sequence, 941 residues long: Isoleucine--tRNA ligase (941 aa).

The 'HIGH' region motif lies at 59–69; that stretch reads PYANGNIHIGH. Glu-562 contacts L-isoleucyl-5'-AMP. A 'KMSKS' region motif is present at residues 603-607; the sequence is KMSKS. An ATP-binding site is contributed by Lys-606. 4 residues coordinate Zn(2+): Cys-904, Cys-907, Cys-924, and Cys-927.

It belongs to the class-I aminoacyl-tRNA synthetase family. IleS type 1 subfamily. As to quaternary structure, monomer. Requires Zn(2+) as cofactor.

It localises to the cytoplasm. The enzyme catalyses tRNA(Ile) + L-isoleucine + ATP = L-isoleucyl-tRNA(Ile) + AMP + diphosphate. Its function is as follows. Catalyzes the attachment of isoleucine to tRNA(Ile). As IleRS can inadvertently accommodate and process structurally similar amino acids such as valine, to avoid such errors it has two additional distinct tRNA(Ile)-dependent editing activities. One activity is designated as 'pretransfer' editing and involves the hydrolysis of activated Val-AMP. The other activity is designated 'posttransfer' editing and involves deacylation of mischarged Val-tRNA(Ile). The protein is Isoleucine--tRNA ligase of Haemophilus influenzae (strain ATCC 51907 / DSM 11121 / KW20 / Rd).